The sequence spans 166 residues: Putative peroxiredoxin (166 aa).

The Thioredoxin domain occupies 1–166 (EIGSTIPNAT…SSAATVLSKL (166 aa)). The Cysteine sulfenic acid (-SOH) intermediate role is filled by Cys-56. A Microbody targeting signal motif is present at residues 164-166 (SKL).

Belongs to the peroxiredoxin family. Prx5 subfamily. In terms of assembly, homodimer; disulfide-linked, upon oxidation.

It carries out the reaction a hydroperoxide + [thioredoxin]-dithiol = an alcohol + [thioredoxin]-disulfide + H2O. Thiol-specific peroxidase that catalyzes the reduction of hydrogen peroxide and organic hydroperoxides to water and alcohols, respectively. Plays a role in cell protection against oxidative stress by detoxifying peroxides and as sensor of hydrogen peroxide-mediated signaling events. This is Putative peroxiredoxin from Malassezia furfur (Pityriasis versicolor infection agent).